A 247-amino-acid polypeptide reads, in one-letter code: Auxin-responsive protein IAA13 (247 aa).

An EAR-like (transcriptional repression) motif is present at residues 14-18; it reads LELGL. Residues 25 to 40 show a composition bias toward gly residues; sequence GTAAKIGKSGGGGAWG. 2 disordered regions span residues 25 to 44 and 49 to 119; these read GTAA…ERGR and KDFP…PKDV. Over residues 62-75 the composition is skewed to low complexity; sequence SASHAGSSPPRSSS. Positions 87–98 are enriched in polar residues; sequence RMNSLVNNQATK. Residues 106 to 119 are compositionally biased toward basic and acidic residues; sequence AGKKKVKDDEPKDV. In terms of domain architecture, PB1 spans 129-225; it reads VGFIKVNMDG…SVKRLRVMKT (97 aa).

Belongs to the Aux/IAA family. As to quaternary structure, homodimers and heterodimers. Interacts with TPL. In terms of tissue distribution, preferentially expressed in stems.

It is found in the nucleus. Its function is as follows. Aux/IAA proteins are short-lived transcriptional factors that function as repressors of early auxin response genes at low auxin concentrations. Repression is thought to result from the interaction with auxin response factors (ARFs), proteins that bind to the auxin-responsive promoter element (AuxRE). Formation of heterodimers with ARF proteins may alter their ability to modulate early auxin response genes expression. The sequence is that of Auxin-responsive protein IAA13 (IAA13) from Arabidopsis thaliana (Mouse-ear cress).